Consider the following 338-residue polypeptide: Nicotinate-nucleotide--dimethylbenzimidazole phosphoribosyltransferase (338 aa).

Residue Glu-305 is the Proton acceptor of the active site.

This sequence belongs to the CobT family.

It carries out the reaction 5,6-dimethylbenzimidazole + nicotinate beta-D-ribonucleotide = alpha-ribazole 5'-phosphate + nicotinate + H(+). The protein operates within nucleoside biosynthesis; alpha-ribazole biosynthesis; alpha-ribazole from 5,6-dimethylbenzimidazole: step 1/2. Catalyzes the synthesis of alpha-ribazole-5'-phosphate from nicotinate mononucleotide (NAMN) and 5,6-dimethylbenzimidazole (DMB). This is Nicotinate-nucleotide--dimethylbenzimidazole phosphoribosyltransferase from Rhizobium rhizogenes (strain K84 / ATCC BAA-868) (Agrobacterium radiobacter).